The sequence spans 969 residues: RNA polymerase-associated protein RapA (969 aa).

The Helicase ATP-binding domain occupies 162–339 (EVGQRVAPRV…FARLALLDAD (178 aa)). An ATP-binding site is contributed by 175–182 (DEVGLGKT). The DEAH box motif lies at 285–288 (DEAH). Positions 492-663 (RIEWLITFLK…GFLKNPQAVG (172 aa)) constitute a Helicase C-terminal domain.

Belongs to the SNF2/RAD54 helicase family. RapA subfamily. Interacts with the RNAP. Has a higher affinity for the core RNAP than for the holoenzyme. Its ATPase activity is stimulated by binding to RNAP.

In terms of biological role, transcription regulator that activates transcription by stimulating RNA polymerase (RNAP) recycling in case of stress conditions such as supercoiled DNA or high salt concentrations. Probably acts by releasing the RNAP, when it is trapped or immobilized on tightly supercoiled DNA. Does not activate transcription on linear DNA. Probably not involved in DNA repair. The protein is RNA polymerase-associated protein RapA of Actinobacillus pleuropneumoniae serotype 5b (strain L20).